Consider the following 117-residue polypeptide: Large ribosomal subunit protein bL20c (117 aa).

It belongs to the bacterial ribosomal protein bL20 family.

The protein resides in the plastid. The protein localises to the chloroplast. Functionally, binds directly to 23S ribosomal RNA and is necessary for the in vitro assembly process of the 50S ribosomal subunit. It is not involved in the protein synthesizing functions of that subunit. This Acorus gramineus (Dwarf sweet flag) protein is Large ribosomal subunit protein bL20c.